We begin with the raw amino-acid sequence, 285 residues long: Purine biosynthesis transcriptional repressor PurR (285 aa).

A DNA binding domain region spans residues 1–73 (MKFRRSGRLV…GAAGGVKYIP (73 aa)). An effector binding domain region spans residues 74-285 (KMKQAEAEEF…NLLKNGETES (212 aa)). Position 102 (Tyr102) interacts with guanosine 3',5'-bis(diphosphate). 5-phospho-alpha-D-ribose 1-diphosphate is bound by residues Ala138, Thr139, Lys140, and Arg160. Guanosine 3',5'-bis(diphosphate)-binding residues include Gly178 and Ser179. 5-phospho-alpha-D-ribose 1-diphosphate-binding residues include Asp203, Asp204, Phe205, Lys207, and Ala208. Lys207 contributes to the guanosine 3',5'-bis(diphosphate) binding site. Gly209, Gly210, and Thr211 together coordinate guanosine 3',5'-bis(diphosphate). Thr211 is a binding site for 5-phospho-alpha-D-ribose 1-diphosphate.

The protein belongs to the purine/pyrimidine phosphoribosyltransferase family. PurR subfamily. In terms of assembly, homodimer.

Its activity is regulated as follows. The binding of PurR to DNA, and therefore the repressor activity, is influenced by interaction with the effector molecules 5-phosphoribosyl 1-pyrophosphate (PRPP) and (p)ppGpp. PRPP binds to PurR and reduces affinity of PurR for DNA, which inhibits the repressor activity and induces transcription of the target genes. On the contrary, (p)ppGpp enhances binding of PurR to DNA and repression of the transcription. PRPP and (p)ppGpp compete for PurR binding and allosteric control of transcription. ppGpp maintains PurR-DNA interaction and prevents PRPP from de-repressing PurR regulation during conditions that lead to (p)ppGpp induction, such as upon amino acid starvation. In terms of biological role, DNA-binding transcriptional repressor that controls the expression of a number of genes involved in the synthesis, metabolism and transport of purines. In response to a signal of excess adenine, represses the transcription of the pur operon, which encodes enzymes of the purine biosynthetic pathway. It also represses the expression of the purA and purR genes. In addition, controls the expression of several other genes or operons, which encode enzymes or transporters playing a role in purine nucleotide metabolism. Acts by binding directly to specific DNA sequences, named PurBoxes, in the upstream control regions of affected genes. Two PurBoxes are required for high-affinity PurR binding. Also responds to amino acid starvation via (p)ppGpp, which strongly increases PurR activity and repression of purine nucleotide biosynthesis genes. In Bacillus subtilis (strain 168), this protein is Purine biosynthesis transcriptional repressor PurR.